Consider the following 510-residue polypeptide: MTDAVQNETVQEASAQEENKLIAERRAKLDQIRKSCKANGHPNDFRRDSLAGDLQKEFGEKSKEELEALNHVVAIAGRVMAKRGPFLVIQETSGRIQAYADKDVQKVLKDKYQGLDIGDIIGVKGALHKSGKGDLYVNMEEYELLTKALRPLPEKFHGLTDQEMRYRQRYVDLIVNEDSRNAFVVRSKVMSAIRNFMISKQFMEVETPMMHVIPGGASARPFVTHHNALDMPMYLRIAPELYLKRLVVGGFDRVFEINRNFRNEGLSPRHNPEFTMMEFYMAYADYKDLMDLTEELLSSVALEVLGSTSMPYGEHTVEFGGTYTRMSMFEAIKHYNPDHAQIQALTEEDIQNRDLMVSIAKSVHVEVEPFWTCGQLLEEIFGETAEPKLMQPTFITGYPADISPLARRSDDNPFFTDRFEFFIGGREVANGFSELNDAEDQDARFKAQVEAKESGDDEAMFYDADYITALEHGLPPTAGQGIGIDRLVMLLTNTHTIRDVILFPAMRPQA.

Residues Glu-420 and Glu-427 each coordinate Mg(2+).

It belongs to the class-II aminoacyl-tRNA synthetase family. As to quaternary structure, homodimer. Requires Mg(2+) as cofactor.

The protein resides in the cytoplasm. The enzyme catalyses tRNA(Lys) + L-lysine + ATP = L-lysyl-tRNA(Lys) + AMP + diphosphate. The polypeptide is Lysine--tRNA ligase (Vibrio vulnificus (strain CMCP6)).